A 182-amino-acid chain; its full sequence is ATP synthase subunit b, chloroplastic (182 aa).

The chain crosses the membrane as a helical span at residues 36-56 (ILLLLLGLMYVLKEFLGSILV).

It belongs to the ATPase B chain family. F-type ATPases have 2 components, F(1) - the catalytic core - and F(0) - the membrane proton channel. F(1) has five subunits: alpha(3), beta(3), gamma(1), delta(1), epsilon(1). F(0) has four main subunits: a(1), b(1), b'(1) and c(10-14). The alpha and beta chains form an alternating ring which encloses part of the gamma chain. F(1) is attached to F(0) by a central stalk formed by the gamma and epsilon chains, while a peripheral stalk is formed by the delta, b and b' chains.

The protein localises to the plastid. It localises to the chloroplast thylakoid membrane. In terms of biological role, f(1)F(0) ATP synthase produces ATP from ADP in the presence of a proton or sodium gradient. F-type ATPases consist of two structural domains, F(1) containing the extramembraneous catalytic core and F(0) containing the membrane proton channel, linked together by a central stalk and a peripheral stalk. During catalysis, ATP synthesis in the catalytic domain of F(1) is coupled via a rotary mechanism of the central stalk subunits to proton translocation. Its function is as follows. Component of the F(0) channel, it forms part of the peripheral stalk, linking F(1) to F(0). In Gracilaria tenuistipitata var. liui (Red alga), this protein is ATP synthase subunit b, chloroplastic.